The primary structure comprises 352 residues: 4-hydroxy-3-methylbut-2-en-1-yl diphosphate synthase (flavodoxin) (352 aa).

[4Fe-4S] cluster contacts are provided by C262, C265, C297, and E304.

This sequence belongs to the IspG family. It depends on [4Fe-4S] cluster as a cofactor.

The enzyme catalyses (2E)-4-hydroxy-3-methylbut-2-enyl diphosphate + oxidized [flavodoxin] + H2O + 2 H(+) = 2-C-methyl-D-erythritol 2,4-cyclic diphosphate + reduced [flavodoxin]. It functions in the pathway isoprenoid biosynthesis; isopentenyl diphosphate biosynthesis via DXP pathway; isopentenyl diphosphate from 1-deoxy-D-xylulose 5-phosphate: step 5/6. Its function is as follows. Converts 2C-methyl-D-erythritol 2,4-cyclodiphosphate (ME-2,4cPP) into 1-hydroxy-2-methyl-2-(E)-butenyl 4-diphosphate. The protein is 4-hydroxy-3-methylbut-2-en-1-yl diphosphate synthase (flavodoxin) of Campylobacter curvus (strain 525.92).